The sequence spans 936 residues: Phosphoenolpyruvate carboxylase (936 aa).

Catalysis depends on residues His-155 and Lys-595.

The protein belongs to the PEPCase type 1 family. As to quaternary structure, homotetramer. It depends on Mg(2+) as a cofactor. Mn(2+) serves as cofactor.

It carries out the reaction oxaloacetate + phosphate = phosphoenolpyruvate + hydrogencarbonate. Its activity is regulated as follows. Exhibits positive allosteric property with acetyl-CoA and fructose 1,6-bisphosphate, and a negative one with L-aspartate and L-malate. In terms of biological role, forms oxaloacetate, a four-carbon dicarboxylic acid source for the tricarboxylic acid cycle. The chain is Phosphoenolpyruvate carboxylase (ppc) from Rhodothermus marinus (Rhodothermus obamensis).